Reading from the N-terminus, the 815-residue chain is Phenylalanine--tRNA ligase beta subunit (815 aa).

The 110-residue stretch at 39–148 (ATELQKFEVA…EYAVVGDNFT (110 aa)) folds into the tRNA-binding domain. A B5 domain is found at 420 to 495 (LQKIPLDFSV…RIYGYDKIES (76 aa)). Residues Asp-473, Asp-479, Glu-482, and Glu-483 each coordinate Mg(2+). An FDX-ACB domain is found at 721-814 (SDFQANFRDY…ISQKFQGTLR (94 aa)).

The protein belongs to the phenylalanyl-tRNA synthetase beta subunit family. Type 1 subfamily. As to quaternary structure, tetramer of two alpha and two beta subunits. Mg(2+) serves as cofactor.

It localises to the cytoplasm. It carries out the reaction tRNA(Phe) + L-phenylalanine + ATP = L-phenylalanyl-tRNA(Phe) + AMP + diphosphate + H(+). This Rickettsia typhi (strain ATCC VR-144 / Wilmington) protein is Phenylalanine--tRNA ligase beta subunit.